The primary structure comprises 447 residues: Signal recognition particle 54 kDa protein (447 aa).

GTP is bound by residues 108–115, 188–192, and 246–249; these read GLYGMGKT, DTAGR, and TKLD.

It belongs to the GTP-binding SRP family. SRP54 subfamily. As to quaternary structure, part of the signal recognition particle protein translocation system, which is composed of SRP and FtsY. Archaeal SRP consists of a 7S RNA molecule of 300 nucleotides and two protein subunits: SRP54 and SRP19.

Its subcellular location is the cytoplasm. The catalysed reaction is GTP + H2O = GDP + phosphate + H(+). Functionally, involved in targeting and insertion of nascent membrane proteins into the cytoplasmic membrane. Binds to the hydrophobic signal sequence of the ribosome-nascent chain (RNC) as it emerges from the ribosomes. The SRP-RNC complex is then targeted to the cytoplasmic membrane where it interacts with the SRP receptor FtsY. The chain is Signal recognition particle 54 kDa protein from Methanopyrus kandleri (strain AV19 / DSM 6324 / JCM 9639 / NBRC 100938).